Consider the following 1127-residue polypeptide: MDCDIASYHVDSFDFLVSKGCQFAAQAVPAEKFRLKNGDAVTMKFTSAQLHKPTLDTGAKLTSDTLPLLPAECRQRGLTYAGNLKVGIDVHVNGSRLDIIEIILGKVPIMLRSEGCHLRGMSRKELVVAGEEPIEKGGYFIVNGSEKVIRLLIANRRNFPIAIIRKTFKEKGKLFSEFGVMMRSVKENHTAVMMTLHYLDTGTMQLALQFRREIFYVPLMYIVKALTDKNDAVISAGFKRGRNQDQFYSSCILNMLAQCQEEEILNQEAAIRAIGSRFRVAVSDRVAPWEDDLEAGRFIIRECVLIHLDSDEEKFHTLAYMTQKLIALVKGECAPETPDNPQFQEASVSGHILLLILRERMENIIGMVRRKLEYMSSRKDFILTSAAILKALGNHTGGEITRGMAYFLATGNLVTRVGLALQQESGFSVIAERINQLRFVSHFRAIHRGAFFMEMRTTDVRKLRPEAWGFICPVHTPDGAPCGLLNHVTASCRIVTDLSDNSNVPSLLAELGMYTHKTVALAPPGEELYPVLMNGRFLGYVPITKAASIERYLRCAKVAKDARIPYTSEIALVRRSTDIKNIQTQYPGIYILSDAGRLIRPVRNLAMDAVEHIGTFEQVYLSVVLDPEEAEPGVTMHQELHPSCLFSFAGNLIPFPDHNQSPRNVYQCQMGKQTMGTAVHAWHSRADNKMYRLQFPQQPMLKLEAYEKYEMDEYPLGTNACVAVISYTGYDMEDAMTINKASYQRGFAHGTVIKVERINLVTERERKTIFYRNPREEIKTVGPDGLPIPGRRYFLDEVYYVTFNMETGDFRTHKFHYAEPAYCGLVRIVEQGEGDSGAKHALIQWRIERNPIIGDKFASRHGQKGINSFLWPVESLPFSETGMVPDIIFNPHGFPSRMTIGMMIESMAGKAAATHGENYDASPFVFNEDNTAINHFGELLTKAGYNYYGNETFYSGVDGRQMEMQIFFGIVYYQRLRHMIADKFQVRATGPIDPITHQPVKGRKKGGGIRFGEMERDAIIAHGTSFVLQDRLLNCSDRDVAYACRRCGSLLSVLMSSRAGSHLLKKKRKDDEPLDYTETQRCRTCDKDDQVFLLQVPRVFRYLTAELAAMNVKIKLGIEHPSKVTGS.

Phosphoserine is present on serine 1025.

This sequence belongs to the RNA polymerase beta chain family. As to quaternary structure, component of the RNA polymerase I (Pol I) complex consisting of at least 13 subunits.

It localises to the nucleus. The protein resides in the nucleolus. The catalysed reaction is RNA(n) + a ribonucleoside 5'-triphosphate = RNA(n+1) + diphosphate. Antisense ribosomal siRNAs silence rRNA expression during the elongation phase by decreasing rpoa-2 occupancy downstream of the RNAi-targeted region in nrde-2-dependent manner. In terms of biological role, DNA-dependent RNA polymerase catalyzes the transcription of DNA into RNA using the four ribonucleoside triphosphates as substrates. Second largest core component of RNA polymerase I which synthesizes ribosomal RNA precursors. Proposed to contribute to the polymerase catalytic activity and forms the polymerase active center together with the largest subunit. Pol I is composed of mobile elements and RPA2 is part of the core element with the central large cleft and probably a clamp element that moves to open and close the cleft. Specifically binds to 18S, 5.8S and 26S rDNA, but not to 5S rDNA. The protein is DNA-directed RNA polymerase I subunit RPA2 homolog of Caenorhabditis elegans.